Here is a 460-residue protein sequence, read N- to C-terminus: Bifunctional protein GlmU (460 aa).

The tract at residues 1 to 229 is pyrophosphorylase; sequence MTNYAIILAA…FNESLGVNDR (229 aa). Residues 8–11, Lys-22, Gln-72, and 77–78 each bind UDP-N-acetyl-alpha-D-glucosamine; these read LAAG and GT. Asp-102 contacts Mg(2+). UDP-N-acetyl-alpha-D-glucosamine is bound by residues Gly-139, Glu-154, Asn-169, and Asn-227. Asn-227 lines the Mg(2+) pocket. The linker stretch occupies residues 230 to 250; the sequence is VALATAETVMRQRITQKHMVN. An N-acetyltransferase region spans residues 251 to 460; that stretch reads GVTFHNPETV…RLAHHPSRSK (210 aa). 2 residues coordinate UDP-N-acetyl-alpha-D-glucosamine: Arg-332 and Lys-350. Residue His-362 is the Proton acceptor of the active site. Tyr-365 and Asn-376 together coordinate UDP-N-acetyl-alpha-D-glucosamine. Acetyl-CoA contacts are provided by residues Ala-379, 385 to 386, Ser-404, Ala-422, and Arg-439; that span reads NY.

In the N-terminal section; belongs to the N-acetylglucosamine-1-phosphate uridyltransferase family. It in the C-terminal section; belongs to the transferase hexapeptide repeat family. Homotrimer. Requires Mg(2+) as cofactor.

The protein resides in the cytoplasm. It carries out the reaction alpha-D-glucosamine 1-phosphate + acetyl-CoA = N-acetyl-alpha-D-glucosamine 1-phosphate + CoA + H(+). The enzyme catalyses N-acetyl-alpha-D-glucosamine 1-phosphate + UTP + H(+) = UDP-N-acetyl-alpha-D-glucosamine + diphosphate. The protein operates within nucleotide-sugar biosynthesis; UDP-N-acetyl-alpha-D-glucosamine biosynthesis; N-acetyl-alpha-D-glucosamine 1-phosphate from alpha-D-glucosamine 6-phosphate (route II): step 2/2. It participates in nucleotide-sugar biosynthesis; UDP-N-acetyl-alpha-D-glucosamine biosynthesis; UDP-N-acetyl-alpha-D-glucosamine from N-acetyl-alpha-D-glucosamine 1-phosphate: step 1/1. Its pathway is bacterial outer membrane biogenesis; LPS lipid A biosynthesis. In terms of biological role, catalyzes the last two sequential reactions in the de novo biosynthetic pathway for UDP-N-acetylglucosamine (UDP-GlcNAc). The C-terminal domain catalyzes the transfer of acetyl group from acetyl coenzyme A to glucosamine-1-phosphate (GlcN-1-P) to produce N-acetylglucosamine-1-phosphate (GlcNAc-1-P), which is converted into UDP-GlcNAc by the transfer of uridine 5-monophosphate (from uridine 5-triphosphate), a reaction catalyzed by the N-terminal domain. The polypeptide is Bifunctional protein GlmU (Streptococcus pyogenes serotype M49 (strain NZ131)).